Reading from the N-terminus, the 334-residue chain is DNA-directed RNA polymerase subunit alpha (334 aa).

An alpha N-terminal domain (alpha-NTD) region spans residues 1-231; it reads MQSNTFLTPR…EQLSVFADLK (231 aa). An alpha C-terminal domain (alpha-CTD) region spans residues 245 to 334; sequence IDPVLLRPVD…GKKDTSHAAP (90 aa).

This sequence belongs to the RNA polymerase alpha chain family. Homodimer. The RNAP catalytic core consists of 2 alpha, 1 beta, 1 beta' and 1 omega subunit. When a sigma factor is associated with the core the holoenzyme is formed, which can initiate transcription.

The catalysed reaction is RNA(n) + a ribonucleoside 5'-triphosphate = RNA(n+1) + diphosphate. DNA-dependent RNA polymerase catalyzes the transcription of DNA into RNA using the four ribonucleoside triphosphates as substrates. The chain is DNA-directed RNA polymerase subunit alpha from Nitrosospira multiformis (strain ATCC 25196 / NCIMB 11849 / C 71).